The sequence spans 349 residues: Putative F-box/kelch-repeat protein At4g02310 (349 aa).

In terms of domain architecture, F-box spans 11-58 (SLFSLLPNDIVLNILARVPRWYHPILSCVSKNLRFLVSSSELKITRSL). A Kelch repeat occupies 154–204 (KIYVFGGIDDMNKRYYEGIHAQVFDLKTQTWHVGPNLSVKLACLNRSVVTP).

The chain is Putative F-box/kelch-repeat protein At4g02310 from Arabidopsis thaliana (Mouse-ear cress).